We begin with the raw amino-acid sequence, 88 residues long: Small ribosomal subunit protein uS15 (88 aa).

This sequence belongs to the universal ribosomal protein uS15 family. Part of the 30S ribosomal subunit. Forms a bridge to the 50S subunit in the 70S ribosome, contacting the 23S rRNA.

Its function is as follows. One of the primary rRNA binding proteins, it binds directly to 16S rRNA where it helps nucleate assembly of the platform of the 30S subunit by binding and bridging several RNA helices of the 16S rRNA. In terms of biological role, forms an intersubunit bridge (bridge B4) with the 23S rRNA of the 50S subunit in the ribosome. This chain is Small ribosomal subunit protein uS15, found in Borreliella afzelii (strain PKo) (Borrelia afzelii).